A 133-amino-acid polypeptide reads, in one-letter code: UPF0047 protein Rv2556c (133 aa).

It belongs to the UPF0047 family.

The chain is UPF0047 protein Rv2556c from Mycobacterium tuberculosis (strain ATCC 25618 / H37Rv).